Here is a 159-residue protein sequence, read N- to C-terminus: Ascorbate-specific PTS system EIIA component (159 aa).

Residues 9 to 152 (VLKQHHTVRL…TSLFAVIDRV (144 aa)) enclose the PTS EIIA type-2 domain. Residue H71 is the Tele-phosphohistidine intermediate of the active site. Residue H71 is modified to Phosphohistidine.

Its subcellular location is the cytoplasm. The phosphoenolpyruvate-dependent sugar phosphotransferase system (sugar PTS), a major carbohydrate active transport system, catalyzes the phosphorylation of incoming sugar substrates concomitantly with their translocation across the cell membrane. The enzyme II UlaABC PTS system is involved in ascorbate transport. The polypeptide is Ascorbate-specific PTS system EIIA component (ulaC) (Mycoplasma pneumoniae (strain ATCC 29342 / M129 / Subtype 1) (Mycoplasmoides pneumoniae)).